Reading from the N-terminus, the 422-residue chain is uncharacterized protein (422 aa).

This sequence belongs to the N(4)/N(6)-methyltransferase family.

It catalyses the reaction a 2'-deoxyadenosine in DNA + S-adenosyl-L-methionine = an N(6)-methyl-2'-deoxyadenosine in DNA + S-adenosyl-L-homocysteine + H(+). This is an uncharacterized protein from Mycoplasma pneumoniae (strain ATCC 29342 / M129 / Subtype 1) (Mycoplasmoides pneumoniae).